A 404-amino-acid polypeptide reads, in one-letter code: Cysteine desulfurase IscS (404 aa).

Pyridoxal 5'-phosphate is bound by residues 75-76 (AT), N155, Q183, and 203-205 (SAH). An N6-(pyridoxal phosphate)lysine modification is found at K206. Residue T243 coordinates pyridoxal 5'-phosphate. The active-site Cysteine persulfide intermediate is C328. C328 is a binding site for [2Fe-2S] cluster.

This sequence belongs to the class-V pyridoxal-phosphate-dependent aminotransferase family. NifS/IscS subfamily. Homodimer. Forms a heterotetramer with IscU, interacts with other sulfur acceptors. Pyridoxal 5'-phosphate serves as cofactor.

The protein localises to the cytoplasm. It catalyses the reaction (sulfur carrier)-H + L-cysteine = (sulfur carrier)-SH + L-alanine. It participates in cofactor biosynthesis; iron-sulfur cluster biosynthesis. Master enzyme that delivers sulfur to a number of partners involved in Fe-S cluster assembly, tRNA modification or cofactor biosynthesis. Catalyzes the removal of elemental sulfur atoms from cysteine to produce alanine. Functions as a sulfur delivery protein for Fe-S cluster synthesis onto IscU, an Fe-S scaffold assembly protein, as well as other S acceptor proteins. The polypeptide is Cysteine desulfurase IscS (Pseudomonas aeruginosa (strain LESB58)).